We begin with the raw amino-acid sequence, 74 residues long: Protein WFDC9 (74 aa).

A signal peptide spans 1–19 (MKFWILLLTVSAHGIVVFL).

The protein resides in the secreted. This chain is Protein WFDC9 (Wfdc9), found in Rattus norvegicus (Rat).